The primary structure comprises 99 residues: Integration host factor subunit beta (99 aa).

The protein belongs to the bacterial histone-like protein family. In terms of assembly, heterodimer of an alpha and a beta chain.

In terms of biological role, this protein is one of the two subunits of integration host factor, a specific DNA-binding protein that functions in genetic recombination as well as in transcriptional and translational control. The polypeptide is Integration host factor subunit beta (Laribacter hongkongensis (strain HLHK9)).